Consider the following 1684-residue polypeptide: Latrophilin Cirl (1684 aa).

The Extracellular portion of the chain corresponds to 1–765; that stretch reads MASNNYIQIM…LFTMFDGNMR (765 aa). Residues 21-110 form the SUEL-type lectin domain; sequence ACEGKKLTIE…KYLEAHYQCV (90 aa). 4 N-linked (GlcNAc...) asparagine glycosylation sites follow: Asn138, Asn251, Asn297, and Asn336. The segment at 181-300 is disordered; the sequence is PPATHATPPG…GPSVSSNGSA (120 aa). Polar residues-rich tracts occupy residues 250–260 and 278–300; these read SNATAPSNTRI and KSSPNRTPGTAASGPSVSSNGSA. A disordered region spans residues 370-391; sequence SFDEDDEEMAGTSTTTPMSTSS. A compositionally biased stretch (low complexity) spans 381–391; the sequence is TSTTTPMSTSS. Residues Asn396, Asn653, Asn701, and Asn728 are each glycosylated (N-linked (GlcNAc...) asparagine). A GAIN-B domain is found at 559–752; that stretch reads RSVVQKVKNI…AILMDVVDEH (194 aa). Cystine bridges form between Cys707–Cys734 and Cys722–Cys736. The tract at residues 707–752 is GPS; the sequence is CVFWNYIDHAWSANGCSLESTNRTHSVCSCNHLTNFAILMDVVDEH. The chain crosses the membrane as a helical span at residues 766-786; sequence IFIYISIAICVVFIVIALLTL. Over 787–799 the chain is Cytoplasmic; that stretch reads KLFNGVFVKSART. Residues 800 to 820 form a helical membrane-spanning segment; the sequence is SIYINIYICLLAIELLFLLGI. Residues 821–826 are Extracellular-facing; the sequence is EQTETS. Residues 827 to 847 form a helical membrane-spanning segment; that stretch reads IFCGFITVFLHCAILSGTSWF. The Cytoplasmic portion of the chain corresponds to 848-873; the sequence is CYEAFHSYSTLTSDELLLEVDQTPKV. The chain crosses the membrane as a helical span at residues 874-894; sequence NCYYLLSYGLSLSVVAISLVI. Over 895 to 918 the chain is Extracellular; that stretch reads NPSTYTQNDYCVLMEANAVFYATF. Residues 919-939 traverse the membrane as a helical segment; that stretch reads VAPVLIFFMAAIGYTFLSWII. At 940–966 the chain is on the cytoplasmic side; that stretch reads MCRKSRTGLKTKEHTRLATVRFDIRCS. The helical transmembrane segment at 967–987 threads the bilayer; that stretch reads FVFFLLLSAVWCSAYFYLRGA. Residues 988–994 are Extracellular-facing; sequence KMDEDVT. The helical transmembrane segment at 995 to 1015 threads the bilayer; it reads GIYGYNFICFNTLLGLYIFVF. Residues 1016-1684 lie on the Cytoplasmic side of the membrane; sequence HCIQNEKIRR…VRCYLEPLAK (669 aa). Residues 1080 to 1100 form a disordered region; the sequence is PLGTNDDAHDEQQQQQHMSAT. 3 positions are modified to phosphoserine: Ser1156, Ser1247, and Ser1254. Disordered stretches follow at residues 1228–1255, 1270–1353, 1441–1520, and 1587–1669; these read KPNSQHGKKKRGGVGAIPASPSGSLHSR, KTKP…APPP, SRYG…LPPQ, and SMRG…SAML. Positions 1298–1314 are enriched in low complexity; the sequence is QQQQQLRQQRQQQQQQL. Ser1315 and Ser1316 each carry phosphoserine. A compositionally biased stretch (low complexity) spans 1328–1348; the sequence is LHLQHQQQQQQQRRAGGQQQL. The span at 1455–1466 shows a compositional bias: polar residues; it reads RNQQQQQHSLAQ. Acidic residues-rich tracts occupy residues 1476–1489 and 1499–1512; these read DEDDDEDEDDEETT and CDEEEEDEESDMED. The segment covering 1631–1654 has biased composition (low complexity); the sequence is QQLQKLSPQSTTSSSSHTSHSNPH.

Belongs to the G-protein coupled receptor 2 family. LN-TM7 subfamily. As to quaternary structure, forms a heterodimer, consisting of a large extracellular region non-covalently linked to a seven-transmembrane moiety. Proteolytically cleaved into 2 subunits, an extracellular subunit and a seven-transmembrane subunit.

It is found in the cell membrane. The protein is Latrophilin Cirl of Drosophila persimilis (Fruit fly).